Here is a 231-residue protein sequence, read N- to C-terminus: Uracil-DNA glycosylase (231 aa).

The active-site Proton acceptor is the Asp71.

This sequence belongs to the uracil-DNA glycosylase (UDG) superfamily. UNG family.

The protein localises to the cytoplasm. The catalysed reaction is Hydrolyzes single-stranded DNA or mismatched double-stranded DNA and polynucleotides, releasing free uracil.. Excises uracil residues from the DNA which can arise as a result of misincorporation of dUMP residues by DNA polymerase or due to deamination of cytosine. The protein is Uracil-DNA glycosylase of Pseudomonas aeruginosa (strain ATCC 15692 / DSM 22644 / CIP 104116 / JCM 14847 / LMG 12228 / 1C / PRS 101 / PAO1).